Here is a 518-residue protein sequence, read N- to C-terminus: MVEAAAGRRSGANRRRPSGGGERRRQQQQHQRLVAVAVAARVVMVAPAATPAPAAGGGGGCVEDILGCLLGVLRALGVTWAAAARPQRQQPRLAAQTPRGPAPGADGRRAAAELRGIPGRIAGNGACAVASLYTLQGKKGVNQDAMIVWENFCSREDTIFCGVFDGHGPNGHLVAKRVRDLLPIKLGADLGTDEGRQTSTSSIKSNGDETGSPGNMGRDAEQNGEYPEIFTALRTSFLRAFNVMDRDLKLHKSIDCFFSGTTAVAVLKQGRNLIIGNLGDSRAILGTRDKDNQLMAVQLTVDLKPNIPSEAQRIRQRRGRIFALPEEPEVARVWLPKYNSPGLAMARAFGDFCLKDYGLISMPEVSYHRITEKDEFVVLATDGVWDVLSNTEVVSIVNRATSRASAARLLVESAHRAWRARFPTSKIDDCAVVCLFLDTDELSETSSSMARDMTNAVEVSSGQHSNTIQLSTGVSSDVVTAVLTDGDDLSAVDAVAKLVTLTDLPNNASGATQSITTK.

Low complexity-rich tracts occupy residues 1–10 (MVEAAAGRRS) and 86–105 (PQRQ…APGA). 2 disordered regions span residues 1–31 (MVEA…QQHQ) and 86–108 (PQRQ…ADGR). The PPM-type phosphatase domain occupies 129–437 (VASLYTLQGK…DDCAVVCLFL (309 aa)). The Mn(2+) site is built by D165 and G166. A disordered region spans residues 192–222 (TDEGRQTSTSSIKSNGDETGSPGNMGRDAEQ). Positions 197–213 (QTSTSSIKSNGDETGSP) are enriched in polar residues. D382 and D428 together coordinate Mn(2+).

This sequence belongs to the PP2C family. Requires Mg(2+) as cofactor. The cofactor is Mn(2+).

It carries out the reaction O-phospho-L-seryl-[protein] + H2O = L-seryl-[protein] + phosphate. It catalyses the reaction O-phospho-L-threonyl-[protein] + H2O = L-threonyl-[protein] + phosphate. This is Probable protein phosphatase 2C 14 from Oryza sativa subsp. japonica (Rice).